The primary structure comprises 495 residues: UPF0371 protein CE2832 (495 aa).

It belongs to the UPF0371 family.

The polypeptide is UPF0371 protein CE2832 (Corynebacterium efficiens (strain DSM 44549 / YS-314 / AJ 12310 / JCM 11189 / NBRC 100395)).